We begin with the raw amino-acid sequence, 456 residues long: MTYPQNVGIKAMEIYVPPQCLDQTLFEKHQGVSAGKYTIGLGLQYMNFCTDREDVCSLALTAVSSLLRKFDIDPKSIGRLEVGTESPIDKAKSVKSVLTTLFEPHGNTSLEGIDTIHACYGGTSALFNAVNWVESRSWDGRDAIVVASDIALYKEDASRPTGGAGCVAMLIGPNAVLSLEPSLRGVYMTNTFDFYKPDMKVEFPIVNGHESIACYLGALDECHKDLLRRTEAAKKQLNGDAPKTGKKVLDLFDYMAFHTPNCKLVSKSYGRLKYNDCLNSTNAADWEGIPDELRNLSYKDSLKDKTLERALVAATKTEFKMRVEPCIAAPSLCGNMYTASLYCSLISLISNIDLASAEGKTIGLFSYGSGAASTLFGMRVTGDLTNMVQKIDLMRRLKQRNIQTPEDYEKACALRLKAYGNKSYKPLGDVSSLTPGTYYLKSIDEAYRRTYAIKGQ.

Alanine 34 serves as a coordination point for (3S)-3-hydroxy-3-methylglutaryl-CoA. Glutamate 85 (proton donor/acceptor) is an active-site residue. Residues cysteine 119, threonine 161, serine 211, histidine 258, lysine 267, asparagine 335, and serine 369 each contribute to the (3S)-3-hydroxy-3-methylglutaryl-CoA site. Residue cysteine 119 is the Acyl-thioester intermediate of the active site. The Proton donor/acceptor role is filled by histidine 258.

The protein belongs to the thiolase-like superfamily. HMG-CoA synthase family.

It catalyses the reaction acetoacetyl-CoA + acetyl-CoA + H2O = (3S)-3-hydroxy-3-methylglutaryl-CoA + CoA + H(+). In terms of biological role, HMG-CoA synthase; part of the gene cluster that mediates the biosynthesis of 1233A, a natural compound known as an inhibitor of HMG-CoA synthase in the mevalonate pathway and with antibacterial and antifungal activities. This enzyme condenses acetyl-CoA with acetoacetyl-CoA to form HMG-CoA, which is the substrate for HMG-CoA reductase. As part of the 1233A biosynthesis cluster, is involved in conferring self-resistance to 1233A. This Fusarium sp protein is Hydroxymethylglutaryl coenzyme A synthase.